The primary structure comprises 456 residues: Enolase (456 aa).

Q167 contributes to the (2R)-2-phosphoglycerate binding site. E209 (proton donor) is an active-site residue. Positions 250, 312, and 339 each coordinate Mg(2+). (2R)-2-phosphoglycerate is bound by residues K364, R393, S394, and K415. The active-site Proton acceptor is the K364.

Belongs to the enolase family. Requires Mg(2+) as cofactor.

Its subcellular location is the cytoplasm. The protein localises to the secreted. It is found in the cell surface. The catalysed reaction is (2R)-2-phosphoglycerate = phosphoenolpyruvate + H2O. Its pathway is carbohydrate degradation; glycolysis; pyruvate from D-glyceraldehyde 3-phosphate: step 4/5. Functionally, catalyzes the reversible conversion of 2-phosphoglycerate (2-PG) into phosphoenolpyruvate (PEP). It is essential for the degradation of carbohydrates via glycolysis. This is Enolase from Mycoplasmopsis pulmonis (strain UAB CTIP) (Mycoplasma pulmonis).